The following is a 71-amino-acid chain: uncharacterized protein (71 aa).

Residues 1–20 (MQKLNKHLKKKKQKRKKMKK) form a disordered region.

This is an uncharacterized protein from Methanocaldococcus jannaschii (strain ATCC 43067 / DSM 2661 / JAL-1 / JCM 10045 / NBRC 100440) (Methanococcus jannaschii).